The following is a 545-amino-acid chain: Monocarboxylate transporter 8 (545 aa).

Positions 1–98 are disordered; the sequence is MALPSPASEE…VETRGTARGF (98 aa). An N-acetylalanine modification is found at Ala-2. At 2–102 the chain is on the cytoplasmic side; it reads ALPSPASEEA…GTARGFQPPE (101 aa). A run of 2 repeats spans residues 29-50 and 51-72. The segment at 29–72 is 2 X 22 AA approximate tandem repeats; the sequence is PVPEPEPEPEPEPEPDPEPVPVPPPEPQPEPEPQPLPDPAPLPE. The segment covering 33–45 has biased composition (acidic residues); it reads PEPEPEPEPEPDP. The segment covering 46 to 70 has biased composition (pro residues); it reads EPVPVPPPEPQPEPEPQPLPDPAPL. The helical transmembrane segment at 103–123 threads the bilayer; it reads GGFGWIVVFAATWCNGSIFGI. The Extracellular segment spans residues 124–149; that stretch reads HNSVGILYSMLLEEEKEKNRQVEFQA. The helical transmembrane segment at 150–170 threads the bilayer; sequence AWVGALAMGMIFFCSPIVSIF. Topologically, residues 171-177 are cytoplasmic; the sequence is TDRLGCR. Residues 178 to 198 form a helical membrane-spanning segment; that stretch reads ITATTGAAVAFIGLHTSSFTS. At 199–206 the chain is on the extracellular side; it reads SLSLRYFT. A helical transmembrane segment spans residues 207–227; it reads YGILFGCGCSFAFQPSLVILG. Topologically, residues 228–235 are cytoplasmic; the sequence is HYFQRRLG. A helical membrane pass occupies residues 236-256; sequence LANGVVSAGSSIFSMSFPFLI. Over 257–264 the chain is Extracellular; that stretch reads KMLGDKIK. The chain crosses the membrane as a helical span at residues 265–285; that stretch reads LAQTFQVLSTFMFVLTLLSLT. The Cytoplasmic portion of the chain corresponds to 286 to 328; sequence YRPLLPSSQDTPSKRGAHTLRQRFLVQFRKYFNMRVFRQRTYR. The chain crosses the membrane as a helical span at residues 329-349; that stretch reads IWAFGIAAAALGYFVPYVHLM. Topologically, residues 350-362 are extracellular; the sequence is KYVEDKFKEIKET. A helical transmembrane segment spans residues 363–383; the sequence is WVLLVCIGATSGLGRLVSGHI. Residues 384–392 are Cytoplasmic-facing; it reads SDSIPGLKK. Residues 393-413 form a helical membrane-spanning segment; it reads IYLQVLSFLLLGLMSMMIPLC. Over 414–415 the chain is Extracellular; it reads RD. Residues 416–436 form a helical membrane-spanning segment; that stretch reads FGGLIVVCLFLGLCDGFFITI. Residues 437–453 lie on the Cytoplasmic side of the membrane; sequence MAPIAFELVGPMQASQA. Residues 454-474 form a helical membrane-spanning segment; the sequence is IGYLLGMMALPMIAGPPIAGL. Residues 475–483 are Extracellular-facing; sequence LRNCFGDYH. The chain crosses the membrane as a helical span at residues 484–504; that stretch reads VAFYFAGVPPIIGAVILFFVP. Residues 505–545 lie on the Cytoplasmic side of the membrane; sequence LMHQRMFKKEQRDSSKDKMLSHDPDPNGELLPGSPTPEEPI. Basic and acidic residues predominate over residues 514 to 529; it reads EQRDSSKDKMLSHDPD. A disordered region spans residues 514–545; it reads EQRDSSKDKMLSHDPDPNGELLPGSPTPEEPI. A Phosphothreonine modification is found at Thr-540.

The protein belongs to the major facilitator superfamily. Monocarboxylate porter (TC 2.A.1.13) family. As to quaternary structure, monomer. Homodimer. Homooligomer. Expressed in cerebral microvessels.

The protein localises to the cell membrane. The protein resides in the apical cell membrane. It catalyses the reaction 3,3',5-triiodo-L-thyronine(out) = 3,3',5-triiodo-L-thyronine(in). It carries out the reaction 3,3',5'-triiodo-L-thyronine(out) = 3,3',5'-triiodo-L-thyronine(in). The catalysed reaction is L-thyroxine(out) = L-thyroxine(in). The enzyme catalyses 3,3'-diiodo-L-thyronine(out) = 3,3'-diiodo-L-thyronine(in). Specific thyroid hormone transmembrane transporter, that mediates both uptake and efflux of thyroid hormones across the cell membrane independently of pH or a Na(+) gradient. Major substrates are the iodothyronines T3 and T4 and to a lesser extent rT3 and 3,3-diiodothyronine (3,3'-T2). Acts as an important mediator of thyroid hormone transport, especially T3, through the blood-brain barrier. This is Monocarboxylate transporter 8 (Slc16a2) from Mus musculus (Mouse).